The following is a 288-amino-acid chain: 4-hydroxy-3-methylbut-2-enyl diphosphate reductase (288 aa).

Position 12 (Cys-12) interacts with [4Fe-4S] cluster. 2 residues coordinate (2E)-4-hydroxy-3-methylbut-2-enyl diphosphate: His-42 and His-77. Residues His-42 and His-77 each coordinate dimethylallyl diphosphate. Isopentenyl diphosphate contacts are provided by His-42 and His-77. Cys-99 lines the [4Fe-4S] cluster pocket. Residue His-127 participates in (2E)-4-hydroxy-3-methylbut-2-enyl diphosphate binding. Position 127 (His-127) interacts with dimethylallyl diphosphate. His-127 contributes to the isopentenyl diphosphate binding site. Catalysis depends on Glu-129, which acts as the Proton donor. Residue Thr-165 participates in (2E)-4-hydroxy-3-methylbut-2-enyl diphosphate binding. Cys-193 lines the [4Fe-4S] cluster pocket. Residues Ser-221, Ser-222, Asn-223, and Ser-265 each contribute to the (2E)-4-hydroxy-3-methylbut-2-enyl diphosphate site. Ser-221, Ser-222, Asn-223, and Ser-265 together coordinate dimethylallyl diphosphate. Residues Ser-221, Ser-222, Asn-223, and Ser-265 each contribute to the isopentenyl diphosphate site.

Belongs to the IspH family. The cofactor is [4Fe-4S] cluster.

It catalyses the reaction isopentenyl diphosphate + 2 oxidized [2Fe-2S]-[ferredoxin] + H2O = (2E)-4-hydroxy-3-methylbut-2-enyl diphosphate + 2 reduced [2Fe-2S]-[ferredoxin] + 2 H(+). The catalysed reaction is dimethylallyl diphosphate + 2 oxidized [2Fe-2S]-[ferredoxin] + H2O = (2E)-4-hydroxy-3-methylbut-2-enyl diphosphate + 2 reduced [2Fe-2S]-[ferredoxin] + 2 H(+). It functions in the pathway isoprenoid biosynthesis; dimethylallyl diphosphate biosynthesis; dimethylallyl diphosphate from (2E)-4-hydroxy-3-methylbutenyl diphosphate: step 1/1. It participates in isoprenoid biosynthesis; isopentenyl diphosphate biosynthesis via DXP pathway; isopentenyl diphosphate from 1-deoxy-D-xylulose 5-phosphate: step 6/6. Catalyzes the conversion of 1-hydroxy-2-methyl-2-(E)-butenyl 4-diphosphate (HMBPP) into a mixture of isopentenyl diphosphate (IPP) and dimethylallyl diphosphate (DMAPP). Acts in the terminal step of the DOXP/MEP pathway for isoprenoid precursor biosynthesis. This chain is 4-hydroxy-3-methylbut-2-enyl diphosphate reductase, found in Thermoanaerobacter pseudethanolicus (strain ATCC 33223 / 39E) (Clostridium thermohydrosulfuricum).